Reading from the N-terminus, the 380-residue chain is Cytochrome b (380 aa).

4 consecutive transmembrane segments (helical) span residues 33–53, 77–98, 113–133, and 178–198; these read FGSL…FLAM, WLIR…YLHI, WTIG…GYVL, and FFAF…IHLL. Positions 83 and 97 each coordinate heme b. Heme b-binding residues include H182 and H196. An a ubiquinone-binding site is contributed by H201. Transmembrane regions (helical) follow at residues 226–246, 288–308, 320–340, and 347–367; these read YKDL…ALFS, LGGV…PFLH, VTQF…WIGG, and FVII…VLIP.

Belongs to the cytochrome b family. In terms of assembly, the cytochrome bc1 complex contains 3 respiratory subunits (MT-CYB, CYC1 and UQCRFS1), 2 core proteins (UQCRC1 and UQCRC2) and probably 6 low-molecular weight proteins. Heme b serves as cofactor.

It localises to the mitochondrion inner membrane. Its function is as follows. Component of the ubiquinol-cytochrome c reductase complex (complex III or cytochrome b-c1 complex) that is part of the mitochondrial respiratory chain. The b-c1 complex mediates electron transfer from ubiquinol to cytochrome c. Contributes to the generation of a proton gradient across the mitochondrial membrane that is then used for ATP synthesis. This chain is Cytochrome b (mt-cyb), found in Kareius bicoloratus (Stone flounder).